Reading from the N-terminus, the 433-residue chain is Anthranilate synthase component 1 (433 aa).

L-tryptophan contacts are provided by residues Ser29 and 219–221 (PYT). Residue 253–254 (GT) participates in chorismate binding. Glu280 provides a ligand contact to Mg(2+). Residues Tyr368, Arg388, 402–404 (GAG), and Gly404 contribute to the chorismate site. Glu417 serves as a coordination point for Mg(2+).

The protein belongs to the anthranilate synthase component I family. Heterotetramer consisting of two non-identical subunits: a beta subunit (TrpG) and a large alpha subunit (TrpE). It depends on Mg(2+) as a cofactor.

It catalyses the reaction chorismate + L-glutamine = anthranilate + pyruvate + L-glutamate + H(+). Its pathway is amino-acid biosynthesis; L-tryptophan biosynthesis; L-tryptophan from chorismate: step 1/5. With respect to regulation, feedback inhibited by tryptophan. In terms of biological role, part of a heterotetrameric complex that catalyzes the two-step biosynthesis of anthranilate, an intermediate in the biosynthesis of L-tryptophan. In the first step, the glutamine-binding beta subunit (TrpG) of anthranilate synthase (AS) provides the glutamine amidotransferase activity which generates ammonia as a substrate that, along with chorismate, is used in the second step, catalyzed by the large alpha subunit of AS (TrpE) to produce anthranilate. In the absence of TrpG, TrpE can synthesize anthranilate directly from chorismate and high concentrations of ammonia. The polypeptide is Anthranilate synthase component 1 (trpE) (Thermococcus kodakarensis (strain ATCC BAA-918 / JCM 12380 / KOD1) (Pyrococcus kodakaraensis (strain KOD1))).